The primary structure comprises 363 residues: Peroxidase (363 aa).

An N-terminal signal peptide occupies residues 1-20 (MKLSLLSTFAAVIIGALALP). Glutamine 21 carries the pyrrolidone carboxylic acid modification. 4 disulfides stabilise this stretch: cysteine 31-cysteine 43, cysteine 42-cysteine 312, cysteine 62-cysteine 148, and cysteine 276-cysteine 341. Histidine 75 serves as the catalytic Proton acceptor. Positions 76, 94, 96, and 98 each coordinate Ca(2+). Asparagine 162 is a glycosylation site (N-linked (GlcNAc...) (high mannose) asparagine). Histidine 203 contacts heme b. Ca(2+)-binding residues include serine 204, aspartate 221, threonine 223, valine 226, and aspartate 228. A glycan (O-linked (Man...) serine) is linked at serine 358.

Belongs to the peroxidase family. Ligninase subfamily. It depends on Ca(2+) as a cofactor. Heme b serves as cofactor.

It is found in the secreted. It catalyses the reaction 2 a phenolic donor + H2O2 = 2 a phenolic radical donor + 2 H2O. This Coprinopsis cinerea (strain Okayama-7 / 130 / ATCC MYA-4618 / FGSC 9003) (Inky cap fungus) protein is Peroxidase (CIP1).